A 649-amino-acid polypeptide reads, in one-letter code: Solute carrier family 22 member 17 (649 aa).

The disordered stretch occupies residues 1–70; it reads MAPRVATGTP…GGDGLGSSLS (70 aa). The segment covering 24 to 34 has biased composition (polar residues); sequence VEITPTSNGQV. Residues 47-57 are compositionally biased toward basic and acidic residues; sequence QGEREREREGE. Residues asparagine 134 and asparagine 143 are each glycosylated (N-linked (GlcNAc...) asparagine). 11 helical membrane passes run 211–231, 240–260, 265–285, 300–320, 330–350, 414–433, 448–468, 477–497, 526–546, 557–577, and 584–604; these read VILE…FLGY, GIVL…AAAG, VMAL…GVYL, ALAG…LALV, MITA…FLES, NIWK…HAIR, FYLC…FLGV, GILL…LGLW, FSVL…LLAA, GLGL…AQRL, and FLQH…IMLL.

The protein belongs to the major facilitator (TC 2.A.1) superfamily. Organic cation transporter (TC 2.A.1.19) family. As to expression, expressed in brain.

It localises to the cell membrane. The protein localises to the vacuole membrane. Functionally, cell surface receptor for LCN2 (24p3) that plays a key role in iron homeostasis and transport. Able to bind iron-bound LCN2 (holo-24p3), followed by internalization of holo-24p3 and release of iron, thereby increasing intracellular iron concentration and leading to inhibition of apoptosis. Also binds iron-free LCN2 (apo-24p3), followed by internalization of apo-24p3 and its association with an intracellular siderophore, leading to iron chelation and iron transfer to the extracellular medium, thereby reducing intracellular iron concentration and resulting in apoptosis. In Homo sapiens (Human), this protein is Solute carrier family 22 member 17 (SLC22A17).